Reading from the N-terminus, the 159-residue chain is 2-C-methyl-D-erythritol 2,4-cyclodiphosphate synthase (159 aa).

A divalent metal cation is bound by residues Asp-8 and His-10. 4-CDP-2-C-methyl-D-erythritol 2-phosphate is bound by residues 8 to 10 and 34 to 35; these read DVH and HS. His-42 is an a divalent metal cation binding site. 4-CDP-2-C-methyl-D-erythritol 2-phosphate contacts are provided by residues 56 to 58, 61 to 65, 100 to 106, 132 to 135, Phe-139, and Arg-142; these read DIG, FPDTD, AQEPKMA, and TTTE.

Belongs to the IspF family. As to quaternary structure, homotrimer. Requires a divalent metal cation as cofactor.

It carries out the reaction 4-CDP-2-C-methyl-D-erythritol 2-phosphate = 2-C-methyl-D-erythritol 2,4-cyclic diphosphate + CMP. It functions in the pathway isoprenoid biosynthesis; isopentenyl diphosphate biosynthesis via DXP pathway; isopentenyl diphosphate from 1-deoxy-D-xylulose 5-phosphate: step 4/6. In terms of biological role, involved in the biosynthesis of isopentenyl diphosphate (IPP) and dimethylallyl diphosphate (DMAPP), two major building blocks of isoprenoid compounds. Catalyzes the conversion of 4-diphosphocytidyl-2-C-methyl-D-erythritol 2-phosphate (CDP-ME2P) to 2-C-methyl-D-erythritol 2,4-cyclodiphosphate (ME-CPP) with a corresponding release of cytidine 5-monophosphate (CMP). The polypeptide is 2-C-methyl-D-erythritol 2,4-cyclodiphosphate synthase (Alkaliphilus metalliredigens (strain QYMF)).